The following is a 390-amino-acid chain: Serine/threonine/tyrosine-protein kinase HT1 (390 aa).

Residues L86–L359 form the Protein kinase domain. Residues F92 to I100 and K113 contribute to the ATP site. D212 functions as the Proton acceptor in the catalytic mechanism.

The protein belongs to the protein kinase superfamily. Ser/Thr protein kinase family. Interacts with DTX56. Binds to MPK4 and MPK12. Associates to CBC1 and CBC2. In terms of processing, autophosphorylated. As to expression, mainly localizes in guard cells. Expressed at low level in leaves, stems, roots and flowers.

It is found in the cell membrane. It catalyses the reaction L-seryl-[protein] + ATP = O-phospho-L-seryl-[protein] + ADP + H(+). The enzyme catalyses L-threonyl-[protein] + ATP = O-phospho-L-threonyl-[protein] + ADP + H(+). The catalysed reaction is L-tyrosyl-[protein] + ATP = O-phospho-L-tyrosyl-[protein] + ADP + H(+). With respect to regulation, inhibited by MPK4 and MPK12. In terms of biological role, serine/threonine/tyrosine kinase involved in the control of stomatal movement in response to CO(2). Functions as a major negative regulator of CO(2)-induced stomatal closing. Does not seem to be involved in stomatal closure in response to abscisic acid (ABA) or light. Involved in the control of red light-induced stomatal opening. Is epistatic to SRK2E/OST1 function during stomatal responses to red light and altered CO(2). Phosphorylates SRK2E/OST1 and GHR1 to prevents SRK2E/OST1- and GHR1-induced activation of SLAC1, thus preventing stomatal closure. Mediates the phosphorylation of CBC1 and CBC2. This Arabidopsis thaliana (Mouse-ear cress) protein is Serine/threonine/tyrosine-protein kinase HT1.